The chain runs to 89 residues: Cell division topological specificity factor (89 aa).

This sequence belongs to the MinE family.

Its function is as follows. Prevents the cell division inhibition by proteins MinC and MinD at internal division sites while permitting inhibition at polar sites. This ensures cell division at the proper site by restricting the formation of a division septum at the midpoint of the long axis of the cell. This chain is Cell division topological specificity factor, found in Klebsiella pneumoniae (strain 342).